The following is a 308-amino-acid chain: Probable manganese-dependent inorganic pyrophosphatase (308 aa).

Residues histidine 9, aspartate 13, aspartate 15, aspartate 75, histidine 97, and aspartate 149 each contribute to the Mn(2+) site.

The protein belongs to the PPase class C family. Mn(2+) serves as cofactor.

It localises to the cytoplasm. It carries out the reaction diphosphate + H2O = 2 phosphate + H(+). This Listeria innocua serovar 6a (strain ATCC BAA-680 / CLIP 11262) protein is Probable manganese-dependent inorganic pyrophosphatase.